We begin with the raw amino-acid sequence, 441 residues long: ATP-dependent protease ATPase subunit HslU (441 aa).

ATP is bound by residues I18, 60–65, D254, E319, and R391; that span reads GVGKTE.

Belongs to the ClpX chaperone family. HslU subfamily. As to quaternary structure, a double ring-shaped homohexamer of HslV is capped on each side by a ring-shaped HslU homohexamer. The assembly of the HslU/HslV complex is dependent on binding of ATP.

The protein resides in the cytoplasm. Its function is as follows. ATPase subunit of a proteasome-like degradation complex; this subunit has chaperone activity. The binding of ATP and its subsequent hydrolysis by HslU are essential for unfolding of protein substrates subsequently hydrolyzed by HslV. HslU recognizes the N-terminal part of its protein substrates and unfolds these before they are guided to HslV for hydrolysis. In Shewanella denitrificans (strain OS217 / ATCC BAA-1090 / DSM 15013), this protein is ATP-dependent protease ATPase subunit HslU.